Consider the following 425-residue polypeptide: UDP-N-acetyl-D-glucosamine 6-dehydrogenase (425 aa).

NAD(+)-binding residues include valine 17, aspartate 35, arginine 40, threonine 86, and threonine 121. The active-site Nucleophile is the cysteine 261. NAD(+) is bound at residue arginine 332.

Belongs to the UDP-glucose/GDP-mannose dehydrogenase family. In terms of assembly, homotrimer.

The catalysed reaction is UDP-N-acetyl-alpha-D-glucosamine + 2 NAD(+) + H2O = UDP-2-acetamido-2-deoxy-alpha-D-glucuronate + 2 NADH + 3 H(+). It participates in capsule biogenesis; capsule polysaccharide biosynthesis. The protein operates within glycan metabolism; Vi-antigen biosynthesis. Its function is as follows. Dehydrogenase required for the biosynthesis of the capsular polysaccharide, commonly referred as the Vi antigen, an important virulence factor. Catalyzes the conversion of UDP-N-acetylglucosamine (UDP-GlcNAc) to UDP-N-acetylglucosaminuronic acid (UDP-GlcNAcA). Cannot use UDP-GalNAc, UDP-Glc and UDP-Gal as substrates. This is UDP-N-acetyl-D-glucosamine 6-dehydrogenase from Salmonella typhi.